Reading from the N-terminus, the 499-residue chain is Glycerol kinase (499 aa).

An ADP-binding site is contributed by Thr12. Positions 12, 13, and 14 each coordinate ATP. Position 12 (Thr12) interacts with sn-glycerol 3-phosphate. Arg16 contacts ADP. Positions 82, 83, and 134 each coordinate sn-glycerol 3-phosphate. Positions 82, 83, and 134 each coordinate glycerol. His230 carries the post-translational modification Phosphohistidine; by HPr. Asp244 provides a ligand contact to sn-glycerol 3-phosphate. 2 residues coordinate glycerol: Asp244 and Gln245. 2 residues coordinate ADP: Thr266 and Gly309. ATP is bound by residues Thr266, Gly309, Gln313, and Gly410. Gly410 and Asn414 together coordinate ADP.

It belongs to the FGGY kinase family. Homotetramer and homodimer (in equilibrium). Post-translationally, the phosphoenolpyruvate-dependent sugar phosphotransferase system (PTS), including enzyme I, and histidine-containing protein (HPr) are required for the phosphorylation, which leads to the activation of the enzyme.

The catalysed reaction is glycerol + ATP = sn-glycerol 3-phosphate + ADP + H(+). It functions in the pathway polyol metabolism; glycerol degradation via glycerol kinase pathway; sn-glycerol 3-phosphate from glycerol: step 1/1. With respect to regulation, activated by phosphorylation and inhibited by fructose 1,6-bisphosphate (FBP). Functionally, key enzyme in the regulation of glycerol uptake and metabolism. Catalyzes the phosphorylation of glycerol to yield sn-glycerol 3-phosphate. This is Glycerol kinase from Staphylococcus epidermidis (strain ATCC 12228 / FDA PCI 1200).